The following is a 391-amino-acid chain: Polyketide synthase 3 (391 aa).

C164 is an active-site residue.

Belongs to the thiolase-like superfamily. Chalcone/stilbene synthases family. As to quaternary structure, homodimer.

It catalyses the reaction (E)-4-coumaroyl-CoA + 3 malonyl-CoA + 3 H(+) = 2',4,4',6'-tetrahydroxychalcone + 3 CO2 + 4 CoA. The protein operates within secondary metabolite biosynthesis; flavonoid biosynthesis. Functionally, polyketide synthase producing p-coumaryltriacetic acid lactone (CTAL) and slightly naringenin chalcone. Can use p-coumaryl-CoA as substrate. The polypeptide is Polyketide synthase 3 (PKS3) (Rubus idaeus (Raspberry)).